A 320-amino-acid polypeptide reads, in one-letter code: N-acetylneuraminate lyase (320 aa).

Positions 51 and 52 each coordinate aceneuramate. The Proton donor role is filled by Tyr-143. The active-site Schiff-base intermediate with substrate is Lys-173. Residues Ser-175, Gly-199, Asp-201, Glu-202, and Ser-218 each coordinate aceneuramate.

Belongs to the DapA family. NanA subfamily. Homotetramer. In terms of tissue distribution, isoform 2 is expressed in placenta, liver, kidney, pancreas, spleen, thymus, ovary, small intestine and peripheral blood leukocyte.

The protein localises to the cytoplasm. The catalysed reaction is aceneuramate = aldehydo-N-acetyl-D-mannosamine + pyruvate. The protein operates within amino-sugar metabolism; N-acetylneuraminate degradation. In terms of biological role, catalyzes the cleavage of N-acetylneuraminic acid (sialic acid) to form pyruvate and N-acetylmannosamine via a Schiff base intermediate. It prevents sialic acids from being recycled and returning to the cell surface. Involved in the N-glycolylneuraminic acid (Neu5Gc) degradation pathway. Although human is not able to catalyze formation of Neu5Gc due to the inactive CMAHP enzyme, Neu5Gc is present in food and must be degraded. This Homo sapiens (Human) protein is N-acetylneuraminate lyase.